An 819-amino-acid polypeptide reads, in one-letter code: Eukaryotic translation initiation factor 3 subunit C (819 aa).

A disordered region spans residues 1–106 (MSRFFLKTYE…DSSDEEDGKK (106 aa)). 2 stretches are compositionally biased toward acidic residues: residues 17 to 41 (GEEE…ELSD) and 47 to 59 (DSDE…EDND). A PCI domain is found at 620 to 795 (FHQHINLDLI…EYIIFERGEE (176 aa)).

The protein belongs to the eIF-3 subunit C family. Component of the eukaryotic translation initiation factor 3 (eIF-3) complex.

Its subcellular location is the cytoplasm. In terms of biological role, component of the eukaryotic translation initiation factor 3 (eIF-3) complex, which is involved in protein synthesis of a specialized repertoire of mRNAs and, together with other initiation factors, stimulates binding of mRNA and methionyl-tRNAi to the 40S ribosome. The eIF-3 complex specifically targets and initiates translation of a subset of mRNAs involved in cell proliferation. The polypeptide is Eukaryotic translation initiation factor 3 subunit C (Kluyveromyces lactis (strain ATCC 8585 / CBS 2359 / DSM 70799 / NBRC 1267 / NRRL Y-1140 / WM37) (Yeast)).